Here is a 109-residue protein sequence, read N- to C-terminus: Phosphoribosyl-ATP pyrophosphatase (109 aa).

This sequence belongs to the PRA-PH family.

It is found in the cytoplasm. It carries out the reaction 1-(5-phospho-beta-D-ribosyl)-ATP + H2O = 1-(5-phospho-beta-D-ribosyl)-5'-AMP + diphosphate + H(+). It functions in the pathway amino-acid biosynthesis; L-histidine biosynthesis; L-histidine from 5-phospho-alpha-D-ribose 1-diphosphate: step 2/9. In Paramagnetospirillum magneticum (strain ATCC 700264 / AMB-1) (Magnetospirillum magneticum), this protein is Phosphoribosyl-ATP pyrophosphatase.